Consider the following 231-residue polypeptide: Phosphoglycolate phosphatase (231 aa).

Asp-9 (nucleophile) is an active-site residue. 2 residues coordinate Mg(2+): Asp-9 and Asp-11. Residue Lys-154 participates in substrate binding. Mg(2+) is bound by residues Asp-177 and Asp-181.

The protein belongs to the archaeal SPP-like hydrolase family. The cofactor is Mg(2+).

The catalysed reaction is 2-phosphoglycolate + H2O = glycolate + phosphate. Its function is as follows. Catalyzes the dephosphorylation of 2-phosphoglycolate. This chain is Phosphoglycolate phosphatase, found in Pyrococcus furiosus (strain ATCC 43587 / DSM 3638 / JCM 8422 / Vc1).